The chain runs to 1122 residues: AP-4 complex subunit epsilon-1 (1122 aa).

A Phosphoserine modification is found at Ser-699. Composition is skewed to basic and acidic residues over residues 714 to 728 and 745 to 760; these read YLPK…KPEA and TTRK…STEE. Disordered stretches follow at residues 714-760 and 797-861; these read YLPK…STEE and SKLK…AEKL. An interaction with TEPSIN region spans residues 726–1122; it reads PEASHVPAEG…CHCQKVMQTS (397 aa). Low complexity predominate over residues 841–853; that stretch reads ELSSELFRSESLS. At Ser-851 the chain carries Phosphoserine.

It belongs to the adaptor complexes large subunit family. In terms of assembly, adaptor protein complex 4 (AP-4) is a heterotetramer composed of two large adaptins (epsilon-type subunit AP4E1 and beta-type subunit AP4B1), a medium adaptin (mu-type subunit AP4M1) and a small adaptin (sigma-type AP4S1). Interacts with TEPSIN. Interacts with GRIA2; probably indirect it mediates the somatodendritic localization of GRIA2 in neurons.

The protein resides in the golgi apparatus. Its subcellular location is the trans-Golgi network membrane. In terms of biological role, component of the adaptor protein complex 4 (AP-4). Adaptor protein complexes are vesicle coat components involved both in vesicle formation and cargo selection. They control the vesicular transport of proteins in different trafficking pathways. AP-4 forms a non clathrin-associated coat on vesicles departing the trans-Golgi network (TGN) and may be involved in the targeting of proteins from the trans-Golgi network (TGN) to the endosomal-lysosomal system. It is also involved in protein sorting to the basolateral membrane in epithelial cells and the proper asymmetric localization of somatodendritic proteins in neurons. AP-4 is involved in the recognition and binding of tyrosine-based sorting signals found in the cytoplasmic part of cargos, but may also recognize other types of sorting signal. This chain is AP-4 complex subunit epsilon-1, found in Mus musculus (Mouse).